We begin with the raw amino-acid sequence, 79 residues long: Acyl carrier protein (79 aa).

The 78-residue stretch at 2–79 (ASKEEILAGL…QDAVDFIXGA (78 aa)) folds into the Carrier domain. Ser40 carries the O-(pantetheine 4'-phosphoryl)serine modification.

The protein belongs to the acyl carrier protein (ACP) family. Post-translationally, 4'-phosphopantetheine is transferred from CoA to a specific serine of apo-ACP by AcpS. This modification is essential for activity because fatty acids are bound in thioester linkage to the sulfhydryl of the prosthetic group.

It localises to the cytoplasm. The protein operates within lipid metabolism; fatty acid biosynthesis. In terms of biological role, carrier of the growing fatty acid chain in fatty acid biosynthesis. The sequence is that of Acyl carrier protein from Myxococcus xanthus.